The following is a 190-amino-acid chain: UPF0301 protein Pden_0436 (190 aa).

Belongs to the UPF0301 (AlgH) family.

This is UPF0301 protein Pden_0436 from Paracoccus denitrificans (strain Pd 1222).